A 2495-amino-acid polypeptide reads, in one-letter code: Zinc finger protein 462 (2495 aa).

3 consecutive C2H2-type zinc fingers follow at residues 4 to 27 (LQCD…QDVH), 108 to 131 (FQCK…RKVH), and 162 to 185 (FSCQ…KMYH). Residue lysine 20 forms a Glycyl lysine isopeptide (Lys-Gly) (interchain with G-Cter in SUMO1); alternate linkage. A Glycyl lysine isopeptide (Lys-Gly) (interchain with G-Cter in SUMO2); alternate cross-link involves residue lysine 20. An interaction with PBX1 region spans residues 215–241 (PCKELPAEVVERSILESMVKPLTKSRG). Residues lysine 234 and lysine 271 each participate in a glycyl lysine isopeptide (Lys-Gly) (interchain with G-Cter in SUMO2) cross-link. Disordered regions lie at residues 278–301 (QQEG…NSTY), 329–357 (RPNS…NSGL), and 370–395 (DMTN…DLNE). Residues 332–343 (SSSTSKFSSSMS) are compositionally biased toward low complexity. Glycyl lysine isopeptide (Lys-Gly) (interchain with G-Cter in SUMO2) cross-links involve residues lysine 337, lysine 348, and lysine 350. Serine 351 and serine 355 each carry phosphoserine. The span at 370–387 (DMTNSSADLDTNSMLNDS) shows a compositional bias: polar residues. Residue lysine 429 forms a Glycyl lysine isopeptide (Lys-Gly) (interchain with G-Cter in SUMO2) linkage. C2H2-type zinc fingers lie at residues 440–463 (FQCP…ENIH) and 471–493 (YKCD…KQCH). Lysine 485 is covalently cross-linked (Glycyl lysine isopeptide (Lys-Gly) (interchain with G-Cter in SUMO2)). The segment at 492–590 (CHTGTSDWDT…PQPPTQAPPL (99 aa)) is disordered. The span at 493–502 (HTGTSDWDTV) shows a compositional bias: polar residues. Residues 503-515 (NSQSESLSSSLNE) are compositionally biased toward low complexity. A compositionally biased stretch (pro residues) spans 542–590 (PPQPPPPLPPPPPPPSQPLPQPPPPPLQSPHQVPPPTQQPQPPTQAPPL). A C2H2-type 6 zinc finger spans residues 593–616 (YKCTMCSYSTMTLKGLRVHQQHKH). Glycyl lysine isopeptide (Lys-Gly) (interchain with G-Cter in SUMO2) cross-links involve residues lysine 624, lysine 650, and lysine 661. The disordered stretch occupies residues 629–654 (PSSLPLENETDSHPSSSNTVKKSQTS). The segment covering 641-654 (HPSSSNTVKKSQTS) has biased composition (polar residues). The residue at position 681 (serine 681) is a Phosphoserine. A Glycyl lysine isopeptide (Lys-Gly) (interchain with G-Cter in SUMO2) cross-link involves residue lysine 699. 3 consecutive C2H2-type zinc fingers follow at residues 835 to 858 (YYCK…QRMH), 878 to 900 (YRCL…YGEH), and 917 to 940 (YRCR…QRMH). Residue lysine 978 forms a Glycyl lysine isopeptide (Lys-Gly) (interchain with G-Cter in SUMO2) linkage. Positions 980-999 (MATSTPVARGGGLPATFNKN) are disordered. A C2H2-type 10 zinc finger spans residues 1023-1046 (YDCDVCSFASPNMHSVLVHYQKKH). The residue at position 1083 (serine 1083) is a Phosphoserine. Residue lysine 1128 forms a Glycyl lysine isopeptide (Lys-Gly) (interchain with G-Cter in SUMO2) linkage. The residue at position 1159 (serine 1159) is a Phosphoserine. Residues lysine 1196, lysine 1204, lysine 1210, and lysine 1232 each participate in a glycyl lysine isopeptide (Lys-Gly) (interchain with G-Cter in SUMO2) cross-link. 2 consecutive C2H2-type zinc fingers follow at residues 1254–1277 (LKCR…KKDH) and 1459–1482 (YQCT…GKKH). Lysine 1488 is covalently cross-linked (Glycyl lysine isopeptide (Lys-Gly) (interchain with G-Cter in SUMO2)). The segment at 1504–1527 (YKCRHCPYINTRIHGVLTHYQKRH) adopts a C2H2-type 13 zinc-finger fold. Glycyl lysine isopeptide (Lys-Gly) (interchain with G-Cter in SUMO2) cross-links involve residues lysine 1560 and lysine 1580. C2H2-type zinc fingers lie at residues 1566–1589 (YRCK…EKYH), 1649–1672 (FRCQ…RIKH), and 1686–1709 (FKCA…QKRH). Glycyl lysine isopeptide (Lys-Gly) (interchain with G-Cter in SUMO2) cross-links involve residues lysine 1687 and lysine 1769. The C2H2-type 17 zinc-finger motif lies at 1881 to 1903 (FQCKHCDSKLQSIAELTSHLNIH). Lysine 1935 participates in a covalent cross-link: Glycyl lysine isopeptide (Lys-Gly) (interchain with G-Cter in SUMO2). The segment at 1957–1981 (YKCKFCVEVHPTLRAICNHLRKHVQ) adopts a C2H2-type 18; degenerate zinc-finger fold. At lysine 1993 the chain carries N6-methyllysine. C2H2-type zinc fingers lie at residues 2014–2037 (YSCQ…QTHH), 2043–2066 (FRCK…LKAH), and 2072–2095 (YKCS…LKVH). A Glycyl lysine isopeptide (Lys-Gly) (interchain with G-Cter in SUMO2) cross-link involves residue lysine 2093. Polar residues-rich tracts occupy residues 2112 to 2121 (SHAHPSSQKA) and 2132 to 2149 (DSSY…NHYQ). The segment at 2112-2172 (SHAHPSSQKA…VPPSGTAAGT (61 aa)) is disordered. 2 positions are modified to phosphoserine: serine 2161 and serine 2166. 3 C2H2-type zinc fingers span residues 2180 to 2203 (LHCE…RDKH), 2209 to 2232 (FKCK…EAGH), and 2243 to 2265 (LRCP…IVLH). Residue lysine 2282 forms a Glycyl lysine isopeptide (Lys-Gly) (interchain with G-Cter in SUMO2) linkage. 2 C2H2-type zinc fingers span residues 2289-2311 (FRCD…IEKH) and 2317-2340 (YKCQ…RDEH). Residues 2361–2387 (KEKIESSSSEDEDKDDEMSSKAEDREL) form a disordered region. The span at 2377 to 2387 (EMSSKAEDREL) shows a compositional bias: basic and acidic residues. The C2H2-type 27 zinc finger occupies 2403–2425 (FPCEFCGRAFSQGSEWERHVLRH). Lysine 2493 is covalently cross-linked (Glycyl lysine isopeptide (Lys-Gly) (interchain with G-Cter in SUMO2)).

As to quaternary structure, interacts with PBX1 isoform PBX1b; this interaction prevents PBX1-HOXA9 heterodimer from forming and binding to DNA. In terms of tissue distribution, expressed in the cerebral cortex (at protein level). Expressed in embryonic stem cells (at protein level). Expressed in heart, liver, kidney, muscle, and female and male genital tracts (at protein level).

The protein resides in the nucleus. Zinc finger nuclear factor involved in transcription by regulating chromatin structure and organization. Involved in the pluripotency and differentiation of embryonic stem cells by regulating SOX2, POU5F1/OCT4, and NANOG. By binding PBX1, prevents the heterodimerization of PBX1 and HOXA9 and their binding to DNA. Regulates neuronal development and neural cell differentiation. This is Zinc finger protein 462 from Mus musculus (Mouse).